The primary structure comprises 200 residues: Holliday junction branch migration complex subunit RuvA (200 aa).

Residues 1–64 (MIAHLTGLVG…EDAFLLYGFA (64 aa)) form a domain I region. The tract at residues 65–143 (EAAERDWFRL…RMPAGPGVTI (79 aa)) is domain II. A flexible linker region spans residues 144–147 (AAPP). Positions 148–200 (ASGGVEADALLALAGLGFRRAEAQPVVGRILARLDGKADLDVVIRESLRELAR) are domain III.

Belongs to the RuvA family. As to quaternary structure, homotetramer. Forms an RuvA(8)-RuvB(12)-Holliday junction (HJ) complex. HJ DNA is sandwiched between 2 RuvA tetramers; dsDNA enters through RuvA and exits via RuvB. An RuvB hexamer assembles on each DNA strand where it exits the tetramer. Each RuvB hexamer is contacted by two RuvA subunits (via domain III) on 2 adjacent RuvB subunits; this complex drives branch migration. In the full resolvosome a probable DNA-RuvA(4)-RuvB(12)-RuvC(2) complex forms which resolves the HJ.

It is found in the cytoplasm. Functionally, the RuvA-RuvB-RuvC complex processes Holliday junction (HJ) DNA during genetic recombination and DNA repair, while the RuvA-RuvB complex plays an important role in the rescue of blocked DNA replication forks via replication fork reversal (RFR). RuvA specifically binds to HJ cruciform DNA, conferring on it an open structure. The RuvB hexamer acts as an ATP-dependent pump, pulling dsDNA into and through the RuvAB complex. HJ branch migration allows RuvC to scan DNA until it finds its consensus sequence, where it cleaves and resolves the cruciform DNA. In Gluconacetobacter diazotrophicus (strain ATCC 49037 / DSM 5601 / CCUG 37298 / CIP 103539 / LMG 7603 / PAl5), this protein is Holliday junction branch migration complex subunit RuvA.